A 290-amino-acid chain; its full sequence is MPRFTKTKGTLAATALGLALAGAAFADPVEDGLVIETDSGPVEIVTKTAPPAFLADTFDTIYSGWHFRDDSTRDLERDDFDNPAMVFVDRGLDKWNAAMGVNGESCASCHQGPESMAGLRAVMPRVDEHTGKLMIMEDYVNACVTERMGLEKWGVTSDNMKDMLSLISLQSRGMAVNVKIDGPAAPYWEHGKEIYYTRYGQLEMSCANCHEDNAGNMIRADHLSQGQINGFPTYRLKDSGMVTAQHRFVGCVRDTRAETFKAGSDDFKALELYVASRGNGLSVEGVSVRH.

Residues 1 to 26 form the signal peptide; that stretch reads MPRFTKTKGTLAATALGLALAGAAFA. Positions 78 and 81 each coordinate Zn(2+). In terms of domain architecture, Cytochrome c spans 78–171; sequence DDFDNPAMVF…DMLSLISLQS (94 aa). Heme c contacts are provided by C106, C109, H110, and C143. H190 contacts Zn(2+). C206, C209, and H210 together coordinate heme c. R247 contacts substrate. C251 contacts heme c. The Cysteine persulfide intermediate role is filled by C251. D266 contributes to the Zn(2+) binding site.

It belongs to the SoxA family. In terms of assembly, heterodimer of SoxA and SoxX. Requires heme c as cofactor. Zn(2+) is required as a cofactor. Post-translationally, cysteine persulfide at Cys-251.

Its subcellular location is the periplasm. The catalysed reaction is L-cysteinyl-[SoxY protein] + thiosulfate + 2 Fe(III)-[cytochrome c] = S-sulfosulfanyl-L-cysteinyl-[SoxY protein] + 2 Fe(II)-[cytochrome c] + 2 H(+). It carries out the reaction S-sulfanyl-L-cysteinyl-[SoxY protein] + thiosulfate + 2 Fe(III)-[cytochrome c] = S-(2-sulfodisulfanyl)-L-cysteinyl-[SoxY protein] + 2 Fe(II)-[cytochrome c] + 2 H(+). Functionally, C-type diheme cytochrome, which is part of the SoxAX cytochrome complex involved in sulfur oxidation. The SoxAX complex catalyzes the formation of a heterodisulfide bond between the conserved cysteine residue on a sulfur carrier SoxYZ complex subunit SoxY and thiosulfate or other inorganic sulfur substrates. This leads to the liberation of two electrons, which may be transferred from the SoxAX complex to another cytochrome c that then channels them into the respiratory electron transport chain. Some electrons may be used for reductive CO(2) fixation. The sequence is that of L-cysteine S-thiosulfotransferase subunit SoxA from Paracoccus pantotrophus (Thiosphaera pantotropha).